Reading from the N-terminus, the 853-residue chain is DNA mismatch repair protein MutS (853 aa).

An ATP-binding site is contributed by 614–621 (GPNMGGKS).

Belongs to the DNA mismatch repair MutS family.

This protein is involved in the repair of mismatches in DNA. It is possible that it carries out the mismatch recognition step. This protein has a weak ATPase activity. The chain is DNA mismatch repair protein MutS from Citrobacter koseri (strain ATCC BAA-895 / CDC 4225-83 / SGSC4696).